The sequence spans 317 residues: ADP-L-glycero-D-manno-heptose-6-epimerase (317 aa).

NADP(+) is bound by residues 10–11, 31–32, Lys38, Lys53, 75–79, and Asn92; these read FI, DD, and QGACS. Tyr139 acts as the Proton acceptor in catalysis. NADP(+) is bound at residue Lys143. Asn166 is a substrate binding site. NADP(+)-binding residues include Val167 and Lys175. The active-site Proton acceptor is Lys175. Residues Gly177, His184, 198–201, Arg211, and Tyr275 contribute to the substrate site; that span reads FQGH.

The protein belongs to the NAD(P)-dependent epimerase/dehydratase family. HldD subfamily. Homopentamer. NADP(+) is required as a cofactor.

The catalysed reaction is ADP-D-glycero-beta-D-manno-heptose = ADP-L-glycero-beta-D-manno-heptose. It functions in the pathway nucleotide-sugar biosynthesis; ADP-L-glycero-beta-D-manno-heptose biosynthesis; ADP-L-glycero-beta-D-manno-heptose from D-glycero-beta-D-manno-heptose 7-phosphate: step 4/4. In terms of biological role, catalyzes the interconversion between ADP-D-glycero-beta-D-manno-heptose and ADP-L-glycero-beta-D-manno-heptose via an epimerization at carbon 6 of the heptose. The polypeptide is ADP-L-glycero-D-manno-heptose-6-epimerase (Shewanella loihica (strain ATCC BAA-1088 / PV-4)).